The sequence spans 219 residues: Ras-related protein Rab-3B (219 aa).

The residue at position 2 (Ala-2) is an N-acetylalanine. GTP contacts are provided by Ser-31, Ser-32, Val-33, Gly-34, Lys-35, Thr-36, Ser-37, Pro-49, and Ser-53. Thr-36 serves as a coordination point for Mg(2+). The Switch 1 motif lies at 45–58 (DTFTPAFVSTVGID). Mg(2+) contacts are provided by Thr-54 and Asp-77. Positions 78-96 (TAGQERYRTITTAYYRGAM) match the Switch 2 motif. Gly-80 contributes to the GTP binding site. The residue at position 86 (Thr-86) is a Phosphothreonine. Positions 135, 136, 138, 166, and 167 each coordinate GTP. A Phosphoserine modification is found at Ser-188. S-geranylgeranyl cysteine attachment occurs at residues Cys-217 and Cys-219. Cys-219 bears the Cysteine methyl ester mark.

It belongs to the small GTPase superfamily. Rab family. In terms of assembly, interacts with RIMS1, RIMS2, RPH3A and RPH3AL. The GTP-bound form interacts with GAS8/DRC4 (via coiled-coil domains). Interacts with GDI2, CHM and CHML; phosphorylation at Thr-86 disrupts these interactions. Interacts with MADD (via uDENN domain); the GTP-bound form is preferred for interaction. Mg(2+) serves as cofactor. Phosphorylation of Thr-86 in the switch II region by LRRK2 prevents the association of RAB regulatory proteins, including CHM, CHML and RAB GDP dissociation inhibitor GDI2.

It localises to the cell membrane. The protein localises to the golgi apparatus. The enzyme catalyses GTP + H2O = GDP + phosphate + H(+). Its activity is regulated as follows. Regulated by guanine nucleotide exchange factors (GEFs) which promote the exchange of bound GDP for free GTP. Regulated by GTPase activating proteins (GAPs) which increase the GTP hydrolysis activity. Inhibited by GDP dissociation inhibitors (GDIs) which prevent Rab-GDP dissociation. Functionally, the small GTPases Rab are key regulators of intracellular membrane trafficking, from the formation of transport vesicles to their fusion with membranes. Rabs cycle between an inactive GDP-bound form and an active GTP-bound form that is able to recruit to membranes different sets of downstream effectors directly responsible for vesicle formation, movement, tethering and fusion. This Bos taurus (Bovine) protein is Ras-related protein Rab-3B (RAB3B).